The following is a 153-amino-acid chain: Small ribosomal subunit protein uS11 (153 aa).

The protein belongs to the universal ribosomal protein uS11 family.

This chain is Small ribosomal subunit protein uS11 (RPS14), found in Chlamydomonas reinhardtii (Chlamydomonas smithii).